The primary structure comprises 156 residues: FAD synthase (156 aa).

ATP is bound by residues 9–10 (TF), 14–17 (HPGH), N92, and H119.

It belongs to the archaeal FAD synthase family. As to quaternary structure, homodimer. A divalent metal cation is required as a cofactor.

It carries out the reaction FMN + ATP + H(+) = FAD + diphosphate. Its pathway is cofactor biosynthesis; FAD biosynthesis; FAD from FMN: step 1/1. Its function is as follows. Catalyzes the transfer of the AMP portion of ATP to flavin mononucleotide (FMN) to produce flavin adenine dinucleotide (FAD) coenzyme. The polypeptide is FAD synthase (Methanospirillum hungatei JF-1 (strain ATCC 27890 / DSM 864 / NBRC 100397 / JF-1)).